The sequence spans 343 residues: MLQTYLQSIMNQSHLTYDEVESVTNLMLNGADPHQIAAFLAVLKYRGETPTEVAGMISALQKQATPVNLPFPALDIVGTGGDLANTVNISTGSAILAAACGIPIAKHGNRSVSSQSGSADVLEALGIEIEMSPEELLSCVQEVGIGFMFAPIYHPSLKKLAPIRKGMKFPSVFNILGPLLNPANTEYALIGVSNEPILELMSEVCLKFKNTKRTFLFHGSGLDELTTLGKVVGYDIQQGKKTRLEIDPTSLGFNSCKIEDLKGGNSKLNACILKKAFMGQQSAIADALIFNAGAAMWVFGNAATLEEGIHSARKTLMEGEALRVLAQWAAFSQQLKLKRGSCN.

5-phospho-alpha-D-ribose 1-diphosphate is bound by residues Gly78, 81 to 82 (GD), Thr86, 88 to 91 (NIST), 106 to 114 (KHGNRSVSS), and Ser118. Gly78 is a binding site for anthranilate. Ser90 is a Mg(2+) binding site. Asn109 contacts anthranilate. Position 164 (Arg164) interacts with anthranilate. The Mg(2+) site is built by Asp223 and Glu224.

Belongs to the anthranilate phosphoribosyltransferase family. Homodimer. Mg(2+) is required as a cofactor.

The enzyme catalyses N-(5-phospho-beta-D-ribosyl)anthranilate + diphosphate = 5-phospho-alpha-D-ribose 1-diphosphate + anthranilate. The protein operates within amino-acid biosynthesis; L-tryptophan biosynthesis; L-tryptophan from chorismate: step 2/5. Catalyzes the transfer of the phosphoribosyl group of 5-phosphorylribose-1-pyrophosphate (PRPP) to anthranilate to yield N-(5'-phosphoribosyl)-anthranilate (PRA). This Chlamydia caviae (strain ATCC VR-813 / DSM 19441 / 03DC25 / GPIC) (Chlamydophila caviae) protein is Anthranilate phosphoribosyltransferase.